A 147-amino-acid chain; its full sequence is Large ribosomal subunit protein uL23A (147 aa).

The segment covering M1 to A10 has biased composition (low complexity). Residues M1–R29 are disordered. Residues K18–R29 are compositionally biased toward basic residues.

The protein belongs to the universal ribosomal protein uL23 family.

In terms of biological role, this protein binds to a specific region on the 26S rRNA. The sequence is that of Large ribosomal subunit protein uL23A from Caenorhabditis elegans.